The primary structure comprises 492 residues: MKKAILSVSNKAGIVTFGQSLIEQNYELYSTGGTMRELANGGLPVKSISELTEFEEIMDGRVKTLHPSVHGGILADRDKPEHLEQLQAQGIDLIDMVVVNLYPFKETVANPNVTEEDAIENIDIGGPTMLRAAAKNFKHVITVVHPADYNEVIDKLKNGTLDEAYRKSLMIKVFEHTNEYDAAIVDYFKDNKESLRYGENPQQSAYFVRTSDAKHTLAGAKQLHGKQLSYNNIKDADAALSLVKQFEQPAAVAVKHMNPCGVGVAETIDEAYKHAFDADNQSIFGGIVALNRTVEKSLAEVLHGIFLEVVIAPKFTQEALEVLGKKKNIRLLEIDMTIDNSEQELVSVSGGYLVQDKDNVKLNREDMTVVTEVEPTEAQWDAMLLGWKVVASVKSNAVILSNAKQTVGIGAGQMNRVGSAQIAIERAIEINDDVAMVSDGFFPMDDTVELAANSGIKAIIQPGGSIKDQESIDMANKHGIAMVTTGVRHFKH.

One can recognise an MGS-like domain in the interval 1–144 (MKKAILSVSN…KNFKHVITVV (144 aa)).

It belongs to the PurH family.

The enzyme catalyses (6R)-10-formyltetrahydrofolate + 5-amino-1-(5-phospho-beta-D-ribosyl)imidazole-4-carboxamide = 5-formamido-1-(5-phospho-D-ribosyl)imidazole-4-carboxamide + (6S)-5,6,7,8-tetrahydrofolate. The catalysed reaction is IMP + H2O = 5-formamido-1-(5-phospho-D-ribosyl)imidazole-4-carboxamide. Its pathway is purine metabolism; IMP biosynthesis via de novo pathway; 5-formamido-1-(5-phospho-D-ribosyl)imidazole-4-carboxamide from 5-amino-1-(5-phospho-D-ribosyl)imidazole-4-carboxamide (10-formyl THF route): step 1/1. The protein operates within purine metabolism; IMP biosynthesis via de novo pathway; IMP from 5-formamido-1-(5-phospho-D-ribosyl)imidazole-4-carboxamide: step 1/1. This chain is Bifunctional purine biosynthesis protein PurH, found in Staphylococcus saprophyticus subsp. saprophyticus (strain ATCC 15305 / DSM 20229 / NCIMB 8711 / NCTC 7292 / S-41).